Here is a 452-residue protein sequence, read N- to C-terminus: Cell division protein FtsZ (452 aa).

Residues 24–28 (GAGSN), 111–113 (GTG), E142, R146, and D190 each bind GTP.

It belongs to the FtsZ family. As to quaternary structure, homodimer. Polymerizes to form a dynamic ring structure in a strictly GTP-dependent manner. Interacts directly with several other division proteins.

The protein localises to the cytoplasm. Functionally, essential cell division protein that forms a contractile ring structure (Z ring) at the future cell division site. The regulation of the ring assembly controls the timing and the location of cell division. One of the functions of the FtsZ ring is to recruit other cell division proteins to the septum to produce a new cell wall between the dividing cells. Binds GTP and shows GTPase activity. In Rickettsia felis (strain ATCC VR-1525 / URRWXCal2) (Rickettsia azadi), this protein is Cell division protein FtsZ.